The chain runs to 132 residues: Small ribosomal subunit protein uS8c (132 aa).

Belongs to the universal ribosomal protein uS8 family. In terms of assembly, part of the 30S ribosomal subunit.

It localises to the plastid. The protein resides in the chloroplast. Its function is as follows. One of the primary rRNA binding proteins, it binds directly to 16S rRNA central domain where it helps coordinate assembly of the platform of the 30S subunit. This chain is Small ribosomal subunit protein uS8c (rps8), found in Angiopteris evecta (Mule's foot fern).